The chain runs to 80 residues: uncharacterized protein (80 aa).

Essential for virus function. This is an uncharacterized protein from Sulfolobus spindle-shape virus 1 (SSV1).